The sequence spans 137 residues: Venom allergen 4 (137 aa).

The signal sequence occupies residues 1–19 (MKTFVLVSCLLVFTQIIYA).

This sequence belongs to the ant venom allergen 2/4 family. Monomer. As to expression, expressed by the venom gland.

It is found in the secreted. The sequence is that of Venom allergen 4 from Solenopsis invicta (Red imported fire ant).